A 566-amino-acid chain; its full sequence is Malate synthase, glyoxysomal (566 aa).

The active-site Proton acceptor is the Arg-179. Catalysis depends on Asp-465, which acts as the Proton donor. The short motif at 564–566 (SRL) is the Microbody targeting signal element.

This sequence belongs to the malate synthase family.

It is found in the glyoxysome. The catalysed reaction is glyoxylate + acetyl-CoA + H2O = (S)-malate + CoA + H(+). Its pathway is carbohydrate metabolism; glyoxylate cycle; (S)-malate from isocitrate: step 2/2. This chain is Malate synthase, glyoxysomal (MLS), found in Raphanus sativus (Radish).